The sequence spans 381 residues: tRNA-cytidine(32) 2-sulfurtransferase (381 aa).

Residues S101–S106 carry the PP-loop motif motif. Positions 176, 179, and 267 each coordinate [4Fe-4S] cluster.

This sequence belongs to the TtcA family. Homodimer. Mg(2+) serves as cofactor. The cofactor is [4Fe-4S] cluster.

Its subcellular location is the cytoplasm. The enzyme catalyses cytidine(32) in tRNA + S-sulfanyl-L-cysteinyl-[cysteine desulfurase] + AH2 + ATP = 2-thiocytidine(32) in tRNA + L-cysteinyl-[cysteine desulfurase] + A + AMP + diphosphate + H(+). It participates in tRNA modification. Functionally, catalyzes the ATP-dependent 2-thiolation of cytidine in position 32 of tRNA, to form 2-thiocytidine (s(2)C32). The sulfur atoms are provided by the cysteine/cysteine desulfurase (IscS) system. The sequence is that of tRNA-cytidine(32) 2-sulfurtransferase from Psychrobacter arcticus (strain DSM 17307 / VKM B-2377 / 273-4).